The primary structure comprises 170 residues: Bifunctional protein PyrR (170 aa).

The PRPP-binding motif lies at 90 to 102 (LVLIDDVLMSGRT).

Belongs to the purine/pyrimidine phosphoribosyltransferase family. PyrR subfamily.

It catalyses the reaction UMP + diphosphate = 5-phospho-alpha-D-ribose 1-diphosphate + uracil. Functionally, regulates the transcription of the pyrimidine nucleotide (pyr) operon in response to exogenous pyrimidines. Also displays a weak uracil phosphoribosyltransferase activity which is not physiologically significant. This is Bifunctional protein PyrR from Pseudomonas syringae pv. tomato (strain ATCC BAA-871 / DC3000).